The chain runs to 495 residues: MALMGVQLVVSLLAVSIMQRMAPHLSFARWLLCNGSLLKFRHPSEGELCALAGKQIPKTSRRDRRQNGHGESKPLTVPKDIDLHLESTPVNVMDALVLRFFVEYQWLIDFAVYATGIYLFTEGYYSVVDASKEVNIASIWCVLTVLFCLRTLYLLMSHYFLSEEGGERSVCLAFGFLSLLIAMLVLVVREDYLEFGLEPGFTSLFDNFEVFARKQGYEWSVPFTKLSVKLGLAVICAFIGALLAFPGLRLAQTHLDAVQMNADRPMIQILLHMSFLSPLVIIVMWIKPIARDFLGNAPMGKTSVTLLSSSAFSSVRLWTIVVLCVLRLLLTRYHLQAYLNLAQKWVEQMKKEAGRIAAIDIQRKVTRIFCYLTVVTLQYLIPILLVLFSTLALKSLGDFSWGLGAETPGVTPAPIIPSSTPPPVPGPEDDEDMEDMEEDIQATVAHLTELFSALRALLTPIFFRGIFAFLTWWVAACQLISSLFGIYFHQYLMHN.

A signal peptide spans 1–28; sequence MALMGVQLVVSLLAVSIMQRMAPHLSFA. Residues 29 to 99 lie on the Extracellular side of the membrane; it reads RWLLCNGSLL…VNVMDALVLR (71 aa). Asparagine 34 is a glycosylation site (N-linked (GlcNAc...) asparagine). Residues 100–120 form a helical membrane-spanning segment; the sequence is FFVEYQWLIDFAVYATGIYLF. Over 121 to 135 the chain is Cytoplasmic; the sequence is TEGYYSVVDASKEVN. The helical transmembrane segment at 136–156 threads the bilayer; that stretch reads IASIWCVLTVLFCLRTLYLLM. Topologically, residues 157–167 are extracellular; sequence SHYFLSEEGGE. The chain crosses the membrane as a helical span at residues 168-188; that stretch reads RSVCLAFGFLSLLIAMLVLVV. The Cytoplasmic segment spans residues 189–227; that stretch reads REDYLEFGLEPGFTSLFDNFEVFARKQGYEWSVPFTKLS. A helical transmembrane segment spans residues 228–248; sequence VKLGLAVICAFIGALLAFPGL. The Extracellular segment spans residues 249–265; sequence RLAQTHLDAVQMNADRP. The helical transmembrane segment at 266-286 threads the bilayer; that stretch reads MIQILLHMSFLSPLVIIVMWI. Over 287–305 the chain is Cytoplasmic; the sequence is KPIARDFLGNAPMGKTSVT. A helical transmembrane segment spans residues 306–326; that stretch reads LLSSSAFSSVRLWTIVVLCVL. Topologically, residues 327–367 are extracellular; sequence RLLLTRYHLQAYLNLAQKWVEQMKKEAGRIAAIDIQRKVTR. The chain crosses the membrane as a helical span at residues 368–388; that stretch reads IFCYLTVVTLQYLIPILLVLF. Topologically, residues 389 to 465 are cytoplasmic; it reads STLALKSLGD…ALLTPIFFRG (77 aa). A helical membrane pass occupies residues 466 to 486; sequence IFAFLTWWVAACQLISSLFGI. Residues 487-495 are Extracellular-facing; that stretch reads YFHQYLMHN.

Belongs to the TMEM161 family.

It localises to the membrane. In terms of biological role, may play a role in protection against oxidative stress. This is Transmembrane protein 161A (tmem161a) from Danio rerio (Zebrafish).